We begin with the raw amino-acid sequence, 272 residues long: Large ribosomal subunit protein uL2cz/uL2cy (272 aa).

Disordered stretches follow at residues M1–R33 and V220–K272. A2 is subject to N-methylalanine. Polar residues predominate over residues K7–S30.

The protein belongs to the universal ribosomal protein uL2 family. As to quaternary structure, component of the chloroplast large ribosomal subunit (LSU). Mature 70S chloroplast ribosomes of higher plants consist of a small (30S) and a large (50S) subunit. The 30S small subunit contains 1 molecule of ribosomal RNA (16S rRNA) and 24 different proteins. The 50S large subunit contains 3 rRNA molecules (23S, 5S and 4.5S rRNA) and 33 different proteins.

The protein localises to the plastid. Its subcellular location is the chloroplast. Functionally, component of the chloroplast ribosome (chloro-ribosome), a dedicated translation machinery responsible for the synthesis of chloroplast genome-encoded proteins, including proteins of the transcription and translation machinery and components of the photosynthetic apparatus. The polypeptide is Large ribosomal subunit protein uL2cz/uL2cy (rpl2-A) (Spinacia oleracea (Spinach)).